Here is a 784-residue protein sequence, read N- to C-terminus: Protein-tyrosine-phosphatase MKP1 (784 aa).

Disordered stretches follow at residues 1-73 (MVGR…NSKA) and 94-118 (PKAGSDDVGEWPHPPTPSGNKTGER). The segment covering 22 to 34 (WRSASWSASRTAS) has biased composition (low complexity). Phosphothreonine is present on residues threonine 64 and threonine 109. In terms of domain architecture, Tyrosine-protein phosphatase spans 149–291 (ECSKVADHIY…LLQCQKRVHA (143 aa)). Cysteine 235 (phosphocysteine intermediate) is an active-site residue. Residue 235–241 (CCQGVSR) participates in substrate binding. A disordered region spans residues 488–586 (HSSGSPSSTT…ASPSLAERRG (99 aa)). Low complexity-rich tracts occupy residues 489 to 510 (SSGSPSSTTSSSSTASPPFLSP) and 521 to 553 (SLKSFSQSSGRSSLRPSIPPSLTLPKFSSLSLL). Positions 554–577 (PSQTSPKESRGVNTFLQPSPNRKA) are enriched in polar residues. A phosphoserine mark is found at serine 558 and serine 572.

Interacts with MPK6. May interact with MPK3 and MPK4. Phosphorylated on threonine and serine residues by MPK6.

Its subcellular location is the cytoplasm. It is found in the cytosol. It catalyses the reaction O-phospho-L-tyrosyl-[protein] + H2O = L-tyrosyl-[protein] + phosphate. Its function is as follows. Protein-tyrosine-phosphatase that acts as a negative regulator of MPK6 and MPK3 signaling by dephosphorylating and repressing MPK6 and MPK3. Modulates defense response by repressing salicylic acid (SA) production, camalexin biosynthesis and SNC1-mediated responses. Acts as a negative regulator of MPK6-mediated pathogen-associated molecular pattern (PAMP) responses, including MPK6 and MPK3 activation, accumulation of extracellular reactive oxygen species and inhibition of seedling growth. Involved in UV-B stress tolerance. May be involved in salt and genotoxic stress responses. This chain is Protein-tyrosine-phosphatase MKP1 (MKP1), found in Arabidopsis thaliana (Mouse-ear cress).